The chain runs to 280 residues: Thylakoid lumenal protein TL20.3, chloroplastic (280 aa).

The N-terminal 59 residues, 1–59 (MAFSSLSPLPMKSLDISRSSSSVSRSPYHFQRYLLRRLQLSSRSNLEIKDSSNTREGCC), are a transit peptide targeting the chloroplast. The N-terminal 31 residues, 60-90 (SSAESNTWKRILSAAMAAAVIASSSGVPAMA), are a transit peptide targeting the thylakoid. Pentapeptide repeat domains are found at residues 124–163 (ENFR…NFSG) and 169–208 (TLMD…DFSD).

As to quaternary structure, interacts with thioredoxin. Interacts in vitro with LTO1.

It is found in the plastid. The protein localises to the chloroplast thylakoid lumen. In terms of biological role, pentapeptide repeat protein of unknown function. Subject to degradation when reduced. This Arabidopsis thaliana (Mouse-ear cress) protein is Thylakoid lumenal protein TL20.3, chloroplastic.